Here is a 328-residue protein sequence, read N- to C-terminus: Diacetylchitobiose uptake system permease protein DasB (328 aa).

Residues 1–27 (MTVQTERPPSGPSDVRKADGGGTGGTR) form a disordered region. 6 consecutive transmembrane segments (helical) span residues 36–56 (ALAP…LLGW), 104–124 (IIFT…IGLL), 134–154 (FVLM…ATTV), 188–208 (FSTF…FVAI), 247–267 (FLYA…VQVY), and 297–317 (MGAA…AYYL). The ABC transmembrane type-1 domain maps to 100–316 (TVRSIIFTAV…LILLGLTAYY (217 aa)).

It belongs to the binding-protein-dependent transport system permease family. In terms of assembly, the complex is composed of two ATP-binding proteins (MsiK), two transmembrane proteins (DasB and DasC) and a solute-binding protein (DasA).

It localises to the cell membrane. In terms of biological role, part of the ABC transporter complex DasABC-MsiK involved in N,N'-diacetylchitobiose ((GlcNAc)2) uptake. Responsible for the translocation of the substrate across the membrane. This Streptomyces coelicolor (strain ATCC BAA-471 / A3(2) / M145) protein is Diacetylchitobiose uptake system permease protein DasB.